A 450-amino-acid polypeptide reads, in one-letter code: Glucose-6-phosphate isomerase (450 aa).

The active-site Proton donor is glutamate 290. Catalysis depends on residues histidine 311 and lysine 425.

It belongs to the GPI family.

It is found in the cytoplasm. It carries out the reaction alpha-D-glucose 6-phosphate = beta-D-fructose 6-phosphate. The protein operates within carbohydrate biosynthesis; gluconeogenesis. Its pathway is carbohydrate degradation; glycolysis; D-glyceraldehyde 3-phosphate and glycerone phosphate from D-glucose: step 2/4. Catalyzes the reversible isomerization of glucose-6-phosphate to fructose-6-phosphate. This is Glucose-6-phosphate isomerase from Listeria innocua serovar 6a (strain ATCC BAA-680 / CLIP 11262).